Reading from the N-terminus, the 139-residue chain is MDKVKKSDQEWRQQLTDEQYRVTRGKGTERPFTGEYYDTKEAGVYVCVCCGEPLFTSENKYDSGCGWPSFWAPMDKEKITEEIDMSHMMVRTEILCSKCDAHLGHVFDDGPQPTGQRYCVNSASLRFHSADGDAKQEDE.

The MsrB domain occupies 8–130 (DQEWRQQLTD…NSASLRFHSA (123 aa)). Cys-47, Cys-50, Cys-96, and Cys-99 together coordinate Zn(2+). Catalysis depends on Cys-119, which acts as the Nucleophile.

The protein belongs to the MsrB Met sulfoxide reductase family. The cofactor is Zn(2+).

It carries out the reaction L-methionyl-[protein] + [thioredoxin]-disulfide + H2O = L-methionyl-(R)-S-oxide-[protein] + [thioredoxin]-dithiol. The protein is Peptide methionine sulfoxide reductase MsrB of Hahella chejuensis (strain KCTC 2396).